We begin with the raw amino-acid sequence, 267 residues long: Putative phosphatase bbp_030 (267 aa).

Asp-8 serves as the catalytic Nucleophile. Position 8 (Asp-8) interacts with Mg(2+). Residue Leu-9 participates in phosphate binding. Asp-10 is a binding site for Mg(2+). Phosphate is bound by residues 42-43 (TG) and Lys-191. Residue Asp-214 participates in Mg(2+) binding. Asn-217 contacts phosphate.

It belongs to the HAD-like hydrolase superfamily. Cof family. Mg(2+) serves as cofactor.

This is Putative phosphatase bbp_030 from Buchnera aphidicola subsp. Baizongia pistaciae (strain Bp).